Consider the following 181-residue polypeptide: MECNQNYYQILDVDNTATKQQITQSYKKLVRKYHPDRNKNPEAIEKFKLIQSSYEVLSDDLKRLNYDSYLTACSNNNNFDVNNNFDVNNNFDVNNDLFNYYFIMKELFDKYDLNEEEQQEILDIFNIEFYQNNINTIGIDKANEILINKLIEYIPKITIKRISGQNKYLGSVVEFFFSFIT.

The 65-residue stretch at 6 to 70 folds into the J domain; the sequence is NYYQILDVDN…LKRLNYDSYL (65 aa).

This is Putative J domain-containing protein R266 from Acanthamoeba polyphaga (Amoeba).